Here is a 290-residue protein sequence, read N- to C-terminus: Aquaporin-3 (290 aa).

The Cytoplasmic segment spans residues 1 to 24 (MGRQKELVTRCGEMLHIRYRLLRQ). Residues 25 to 42 (ALAECLGTLILVMFGCGS) form a helical membrane-spanning segment. The Extracellular portion of the chain corresponds to 43-56 (VAQVVLSRGTHGGF). Residues 57–74 (LTINLAFGFAVTLGILVA) form a helical membrane-spanning segment. The Cytoplasmic segment spans residues 75–78 (GQVS). Positions 79–92 (GAHLNPAVTFAMCF) form an intramembrane region, discontinuously helical. The NPA 1 motif lies at 83 to 85 (NPA). Topologically, residues 93-100 (LAREPWIK) are cytoplasmic. A helical transmembrane segment spans residues 101–121 (LPVYTLAQTLGAFLGAGIIFG). At 122–159 (LYYDAIWAFANNQLIVSGPNGTAGIFATYPSGHLDMVN) the chain is on the extracellular side. A glycan (N-linked (GlcNAc...) asparagine) is linked at N141. The chain crosses the membrane as a helical span at residues 160 to 177 (GFFDQFIGTASLIVCVLA). Over 178–189 (IVDPNNNPVPRG) the chain is Cytoplasmic. Residues 190–206 (LEAFTVGLVVLVIGTSM) traverse the membrane as a helical segment. The Extracellular segment spans residues 207–210 (GFNS). The discontinuously helical intramembrane region spans 211–224 (GYAVNPARDFGPRL). The NPA 2 signature appears at 215-217 (NPA). Residues 225 to 242 (FTAIAGWGSEVFTTGRHW) are Extracellular-facing. Residues 243-264 (WWVPIASPLLGSIAGVFVYQLM) form a helical membrane-spanning segment. At 265–290 (IGCHLEPPPPSTDEENVKLSQVKHKE) the chain is on the cytoplasmic side.

The protein belongs to the MIP/aquaporin (TC 1.A.8) family. Homotetramer; each monomer provides an independent glycerol/water pore. Could also exist in other oligomeric states. In terms of tissue distribution, highly expressed in stomach and spleen, with lower expression in kidney and lung.

Its subcellular location is the cell membrane. The protein localises to the basolateral cell membrane. The enzyme catalyses glycerol(in) = glycerol(out). The catalysed reaction is H2O(in) = H2O(out). It carries out the reaction urea(in) = urea(out). It catalyses the reaction H2O2(out) = H2O2(in). Functionally, aquaglyceroporins form homotetrameric transmembrane channels, with each monomer independently mediating glycerol and water transport across the plasma membrane along their osmotic gradient. Could also be permeable to urea. Also participates in cell permeability to H2O2 and H2O2-mediated signaling. In skin, transports glycerol to the epidermis and stratum corneum, where it maintains hydration, elasticity, and supports lipid biosynthesis for barrier repair. In kidney, contributes to the reabsorption of water, helping the body maintain proper fluid balance. The polypeptide is Aquaporin-3 (Sus scrofa (Pig)).